The following is a 354-amino-acid chain: uncharacterized protein (354 aa).

Belongs to the asfivirus B354L family.

This is an uncharacterized protein from African swine fever virus (isolate Tick/South Africa/Pretoriuskop Pr4/1996) (ASFV).